The primary structure comprises 163 residues: MNAKGKVIKYGNNVDTDVIIPARYLNTSDPAELASHCMEDLDEKFTQRVQKGDVMVAGKNFGCGSSREHAPISIKASGISCVIAETFARIFYRNAVNIGLPIIECSEAAKDIKDNDQVEIDFDKGLIKNLTTGKTYQGQPFPEFMQEIISADGLIQYIKNSLS.

This sequence belongs to the LeuD family. LeuD type 2 subfamily. Heterodimer of LeuC and LeuD.

It catalyses the reaction (2R,3S)-3-isopropylmalate = (2S)-2-isopropylmalate. It functions in the pathway amino-acid biosynthesis; L-leucine biosynthesis; L-leucine from 3-methyl-2-oxobutanoate: step 2/4. Functionally, catalyzes the isomerization between 2-isopropylmalate and 3-isopropylmalate, via the formation of 2-isopropylmaleate. In Ruminiclostridium cellulolyticum (strain ATCC 35319 / DSM 5812 / JCM 6584 / H10) (Clostridium cellulolyticum), this protein is 3-isopropylmalate dehydratase small subunit.